The following is a 412-amino-acid chain: Histone-lysine N-methyltransferase SUV39H1 (412 aa).

The interaction with SIRT1 stretch occupies residues 1–89 (MAENLKGCSV…LKCVRILKQF (89 aa)). The region spanning 43 to 101 (FEVEYLCDYKKIREQEYYLVKWRGYPDSESTWEPRQNLKCVRILKQFHKDLERELLRRH) is the Chromo domain. Positions 179 to 240 (VGCECQDCLW…DCPNRVVQKG (62 aa)) constitute a Pre-SET domain. Residues C181, C183, C186, C194, C195, C222, C226, C228, and C232 each coordinate Zn(2+). The SET domain occupies 243-366 (YDLCIFRTDD…AGEELTFDYN (124 aa)). Residue 254-256 (RGW) participates in S-adenosyl-L-methionine binding. The segment at 255–377 (GWGVRTLEKI…QVDPVDMEST (123 aa)) is mediates interaction with MECOM. N6-acetyllysine is present on K266. Residues Y297 and 323–324 (NH) each bind S-adenosyl-L-methionine. Zn(2+) is bound at residue C326. S391 is subject to Phosphoserine. Positions 396–412 (VRIECKCGTESCRKYLF) constitute a Post-SET domain. Residues C400, C402, and C407 each contribute to the Zn(2+) site.

The protein belongs to the class V-like SAM-binding methyltransferase superfamily. Histone-lysine methyltransferase family. Suvar3-9 subfamily. Interacts with H3 and H4 histones. Interacts with GFI1B, DNMT3B, CBX1, CBX4, CCAR2, MBD1, RUNX1, RUNX3, MYOD1, SMAD5 and RB1. Interacts with SBF1 through the SET domain. Interacts with HDAC1 and HDAC2 through the N-terminus and associates with the core histone deacetylase complex composed of HDAC1, HDAC2, RBBP4 and RBBP7. Component of the eNoSC complex, composed of SIRT1, SUV39H1 and RRP8. Interacts (via SET domain) with MECOM; enhances MECOM transcriptional repression activity. Interacts with LMNA; the interaction increases stability of SUV39H1. The large PER complex involved in the histone methylation is composed of at least PER2, CBX3, TRIM28, SUV39H1 and/or SUV39H2; CBX3 mediates the formation of the complex. In terms of assembly, (Microbial infection) Interacts with HTLV-1 Tax protein, leading to abrogate Tax transactivation of HTLV-1 LTR. In terms of processing, phosphorylated on serine residues, and to a lesser degree, on threonine residues. The phosphorylated form is stabilized by SBF1 and is less active in its transcriptional repressor function. Post-translationally, ubiquitinated by the DCX(DCAF13) E3 ubiquitin ligase complex, leading to its degradation. Acetylated at Lys-266, leading to inhibition of enzyme activity. SIRT1-mediated deacetylation relieves this inhibition. In terms of processing, (Microbial infection) A higher molecular weight form is also seen in M.bovis infected cells.

It localises to the nucleus. The protein localises to the nucleus lamina. It is found in the nucleoplasm. Its subcellular location is the chromosome. The protein resides in the centromere. It localises to the cytoplasmic vesicle. The protein localises to the phagosome lumen. It is found in the cell membrane. The catalysed reaction is L-lysyl(9)-[histone H3] + 3 S-adenosyl-L-methionine = N(6),N(6),N(6)-trimethyl-L-lysyl(9)-[histone H3] + 3 S-adenosyl-L-homocysteine + 3 H(+). Its activity is regulated as follows. Inhibited by S-adenosyl-L-homocysteine. Negatively regulated by CCAR2. In terms of biological role, histone methyltransferase that specifically trimethylates 'Lys-9' of histone H3 using monomethylated H3 'Lys-9' as substrate. Also weakly methylates histone H1 (in vitro). H3 'Lys-9' trimethylation represents a specific tag for epigenetic transcriptional repression by recruiting HP1 (CBX1, CBX3 and/or CBX5) proteins to methylated histones. Mainly functions in heterochromatin regions, thereby playing a central role in the establishment of constitutive heterochromatin at pericentric and telomere regions. H3 'Lys-9' trimethylation is also required to direct DNA methylation at pericentric repeats. SUV39H1 is targeted to histone H3 via its interaction with RB1 and is involved in many processes, such as repression of MYOD1-stimulated differentiation, regulation of the control switch for exiting the cell cycle and entering differentiation, repression by the PML-RARA fusion protein, BMP-induced repression, repression of switch recombination to IgA and regulation of telomere length. Component of the eNoSC (energy-dependent nucleolar silencing) complex, a complex that mediates silencing of rDNA in response to intracellular energy status and acts by recruiting histone-modifying enzymes. The eNoSC complex is able to sense the energy status of cell: upon glucose starvation, elevation of NAD(+)/NADP(+) ratio activates SIRT1, leading to histone H3 deacetylation followed by dimethylation of H3 at 'Lys-9' (H3K9me2) by SUV39H1 and the formation of silent chromatin in the rDNA locus. Recruited by the large PER complex to the E-box elements of the circadian target genes such as PER2 itself or PER1, contributes to the conversion of local chromatin to a heterochromatin-like repressive state through H3 'Lys-9' trimethylation. Its function is as follows. (Microbial infection) Plays a role in defense against mycobacterial infections. Methylates M.tuberculosis HupB on 'Lys-140', probably methylates HupB of M.bovis also. Methylation has an inhibitory effect on mycobacterial growth in the host. Macrophages expressing about 60% SUV39H1 are slightly more susceptible to M.bovis or M.tuberculosis infection. Chaetocin (an inhibitor of this enzyme) increases macrophage survival of M.tuberculosis. This protein inhibits biofilm formation by M.tuberculosis via 'Lys-140' trimethylation. In Homo sapiens (Human), this protein is Histone-lysine N-methyltransferase SUV39H1 (SUV39H1).